A 96-amino-acid chain; its full sequence is Conotoxin Mr15.1 (96 aa).

The N-terminal stretch at 1-20 (MSTLKMMLLILLLLLPLATF) is a signal peptide. Positions 21–57 (DSDGQAIPGGGIPSAVNSRVGRLLGGDEKSGRSLEKR) are excised as a propeptide.

The protein belongs to the conotoxin N superfamily. Contains 4 disulfide bonds. In terms of tissue distribution, expressed by the venom duct.

Its subcellular location is the secreted. The protein is Conotoxin Mr15.1 of Conus marmoreus (Marble cone).